The chain runs to 56 residues: Sex-specific storage protein 1 (56 aa).

It belongs to the hemocyanin family. As to expression, expressed in fat body and ovary.

The protein resides in the secreted. Its function is as follows. Larval storage protein (LSP) which may serve as a store of amino acids for synthesis of adult proteins. The biosynthesis, accumulation and sequestration of storage protein-1 takes place during metamorphosis and saves energy for the non-feeding pupal stage. May also be essential for egg formation. This is Sex-specific storage protein 1 from Amsacta albistriga (Red hairy caterpillar).